The following is an 883-amino-acid chain: NF-X1-type zinc finger protein NFXL2 (883 aa).

Residues M1–T10 are compositionally biased toward polar residues. Residues M1–R44 form a disordered region. The RING-type; degenerate zinc finger occupies C87–R152. 11 consecutive NF-X1-type zinc fingers follow at residues C198 to K216, C250 to E269, C303 to Y322, C357 to I377, C410 to E429, C437 to I456, C494 to L515, C523 to E568, C605 to L636, C646 to T664, and C709 to C738. The interval E798 to Q824 is disordered. The helical transmembrane segment at M841–L863 threads the bilayer.

This sequence belongs to the NFX1 family. As to quaternary structure, interacts with ADO1/ZTL. Constitutively expressed in mesophyll and guard cells.

It is found in the nucleus. The protein localises to the membrane. The protein operates within protein modification; protein ubiquitination. Probable transcriptional regulator. May mediate E2- or E3-dependent ubiquitination. Required to gate light sensitivity during the night. Regulates the speed of the clock by acting in the feedback loop between CCA1, LHY and APRR1/TOC1. Promotes the expression of CCA1 at night but not by days. This activational effect is enhanced by interaction with ADO1/ZTL. Association with ADO1/ZTL is not leading to the degradation of NFXL2. Confers sensitivity to osmotic stress such as high salinity. Prevents H(2)O(2) production and abscisic acid accumulation. Part of a regulatory network that integrates the biosynthesis and action of abscisic acid, reactive oxygen species and cuticle components. The sequence is that of NF-X1-type zinc finger protein NFXL2 (NFXL2) from Arabidopsis thaliana (Mouse-ear cress).